A 177-amino-acid chain; its full sequence is Small ribosomal subunit protein uS5 (177 aa).

Residues 21 to 84 form the S5 DRBM domain; that stretch reads LKEKMISVNR…DEARRGMIKI (64 aa).

The protein belongs to the universal ribosomal protein uS5 family. In terms of assembly, part of the 30S ribosomal subunit. Contacts proteins S4 and S8.

With S4 and S12 plays an important role in translational accuracy. In terms of biological role, located at the back of the 30S subunit body where it stabilizes the conformation of the head with respect to the body. The sequence is that of Small ribosomal subunit protein uS5 from Nitrosomonas eutropha (strain DSM 101675 / C91 / Nm57).